The primary structure comprises 395 residues: Elongation factor Tu (395 aa).

The region spanning 10 to 205 (KPHVNIGTIG…VDSYIPLPPR (196 aa)) is the tr-type G domain. The G1 stretch occupies residues 19 to 26 (GHVDHGKT). 19–26 (GHVDHGKT) is a binding site for GTP. A Mg(2+)-binding site is contributed by Thr-26. Residues 60–64 (GITIN) are G2. Residues 81–84 (DCPG) are G3. Residues 81-85 (DCPGH) and 136-139 (NKVD) each bind GTP. The G4 stretch occupies residues 136 to 139 (NKVD). The interval 174-176 (SAT) is G5.

This sequence belongs to the TRAFAC class translation factor GTPase superfamily. Classic translation factor GTPase family. EF-Tu/EF-1A subfamily. Monomer.

It is found in the cytoplasm. It catalyses the reaction GTP + H2O = GDP + phosphate + H(+). Functionally, GTP hydrolase that promotes the GTP-dependent binding of aminoacyl-tRNA to the A-site of ribosomes during protein biosynthesis. The protein is Elongation factor Tu of Terrimonas ferruginea (Flavobacterium ferrugineum).